Consider the following 314-residue polypeptide: Inactive protein FRIGIDA (314 aa).

A compositionally biased stretch (low complexity) spans 1–18 (MSNYPPTVAAQPTTTANP). The interval 1-31 (MSNYPPTVAAQPTTTANPLLQRHQSEQRRRE) is disordered. Positions 67–97 (VAVETFKRQFDDLQKHIESIENAIDSKLESN) form a coiled coil.

It belongs to the Frigida family.

It localises to the nucleus. The protein is Inactive protein FRIGIDA (FRI) of Arabidopsis thaliana (Mouse-ear cress).